We begin with the raw amino-acid sequence, 342 residues long: Large ribosomal subunit protein uL3 (342 aa).

Belongs to the universal ribosomal protein uL3 family. Part of the 50S ribosomal subunit. Forms a cluster with proteins L14 and L24e.

Functionally, one of the primary rRNA binding proteins, it binds directly near the 3'-end of the 23S rRNA, where it nucleates assembly of the 50S subunit. The polypeptide is Large ribosomal subunit protein uL3 (Pyrobaculum islandicum (strain DSM 4184 / JCM 9189 / GEO3)).